We begin with the raw amino-acid sequence, 85 residues long: Small ribosomal subunit protein uS17 (85 aa).

The protein belongs to the universal ribosomal protein uS17 family. Part of the 30S ribosomal subunit.

Functionally, one of the primary rRNA binding proteins, it binds specifically to the 5'-end of 16S ribosomal RNA. This is Small ribosomal subunit protein uS17 from Geobacter sp. (strain M21).